A 122-amino-acid polypeptide reads, in one-letter code: Aspartate 1-decarboxylase (122 aa).

Ser-25 functions as the Schiff-base intermediate with substrate; via pyruvic acid in the catalytic mechanism. Residue Ser-25 is modified to Pyruvic acid (Ser). Thr-57 contributes to the substrate binding site. Tyr-58 functions as the Proton donor in the catalytic mechanism. 73 to 75 (GAA) lines the substrate pocket.

It belongs to the PanD family. As to quaternary structure, heterooctamer of four alpha and four beta subunits. The cofactor is pyruvate. In terms of processing, is synthesized initially as an inactive proenzyme, which is activated by self-cleavage at a specific serine bond to produce a beta-subunit with a hydroxyl group at its C-terminus and an alpha-subunit with a pyruvoyl group at its N-terminus.

Its subcellular location is the cytoplasm. The enzyme catalyses L-aspartate + H(+) = beta-alanine + CO2. It functions in the pathway cofactor biosynthesis; (R)-pantothenate biosynthesis; beta-alanine from L-aspartate: step 1/1. Its function is as follows. Catalyzes the pyruvoyl-dependent decarboxylation of aspartate to produce beta-alanine. This is Aspartate 1-decarboxylase from Bordetella parapertussis (strain 12822 / ATCC BAA-587 / NCTC 13253).